The chain runs to 248 residues: Triosephosphate isomerase (248 aa).

Substrate-binding residues include Asn10 and Lys12. The Electrophile role is filled by His95. The Proton acceptor role is filled by Glu165.

It belongs to the triosephosphate isomerase family. As to quaternary structure, homodimer.

The catalysed reaction is D-glyceraldehyde 3-phosphate = dihydroxyacetone phosphate. It participates in carbohydrate biosynthesis; gluconeogenesis. It functions in the pathway carbohydrate degradation; glycolysis; D-glyceraldehyde 3-phosphate from glycerone phosphate: step 1/1. In Kluyveromyces lactis (strain ATCC 8585 / CBS 2359 / DSM 70799 / NBRC 1267 / NRRL Y-1140 / WM37) (Yeast), this protein is Triosephosphate isomerase (TPI1).